Here is a 1025-residue protein sequence, read N- to C-terminus: MKFFALFIYRPVATILLSVAITLCGILGFRMLPVAPLPQVDFPVIMVSASLPGASPETMASSVATPLERSLGRIAGVSEMTSSSSLGSTRIILQFDFDRDINGAARDVQAAINAAQSLLPSGMPSRPTYRKANPSDAPIMILTLTSDTYSQGELYDFASTQLAPTISQIDGVGDVDVGGSSLPAVRVGLNPQALFNQGVSLDDVRTAISNANVRKPQGALEDGTHRWQIQTNDELKTAAEYQPLIIHYNNGGAVRLGDVATVTDSVQDVRNAGMTNAKPAILLMIRKLPEANIIQTVDSIRAKLPELQETIPAAIDLQIAQDRSPTIRASLEEVEQTLIISVALVILVVFLFLRSGRATIIPAVAVPVSLIGTFAAMYLCGFSLNNLSLMALTIATGFVVDDAIVVLENIARHLEAGMKPLQAALQGTREVGFTVLSMSLSLVAVFLPLLLMGGLPGRLLREFAVTLSVAIVISLLVSLTLTPMMCGWMLKASKPREQKRLRGFGRMLVALQQGYGKSLKWVLNHTRLVGVVLLGTIALNIWLYISIPKTFFPEQDTGVLMGGIQADQSISFQAMRGKLQDFMKIIRDDPAVDNVTGFTGGSRVNSGMMFITLKPRDERSETAQQIIDRLRVKLAKEPGANLFLMAVQDIRVGGRQSNASYQYTLLSDDLAALREWEPKIRKKLATLPELADVNSDQQDNGAEMNLVYDRDTMARLGIDVQAANSLLNNAFGQRQISTIYQPMNQYKVVMEVDPRYTQDISALEKMFVINNEGKAIPLSYFAKWQPANAPLSVNHQGLSAASTISFNLPTGKSLSDASAAIDRAMTQLGVPSTVRGSFAGTAQVFQETMNSQVILIIAAIATVYIVLGILYESYVHPLTILSTLPSAGVGALLALELFNAPFSLIALIGIMLLIGIVKKNAIMMVDFALEAQRHGNLTPQEAIFQACLLRFRPIMMTTLAALFGALPLVLSGGDGSELRQPLGITIVGGLVMSQLLTLYTTPVVYLFFDRLRLRFSRKPKQTVTE.

12 consecutive transmembrane segments (helical) span residues 3–23, 333–353, 360–380, 387–407, 431–451, 463–483, 528–548, 853–873, 875–895, 897–917, 953–973, and 984–1004; these read FFALFIYRPVATILLSVAITL, EVEQTLIISVALVILVVFLFL, IIPAVAVPVSLIGTFAAMYLC, LSLMALTIATGFVVDDAIVVL, VGFTVLSMSLSLVAVFLPLLL, FAVTLSVAIVISLLVSLTLTP, LVGVVLLGTIALNIWLYISIP, VILIIAAIATVYIVLGILYES, VHPLTILSTLPSAGVGALLAL, LFNAPFSLIALIGIMLLIGIV, PIMMTTLAALFGALPLVLSGG, and ITIVGGLVMSQLLTLYTTPVV.

Belongs to the resistance-nodulation-cell division (RND) (TC 2.A.6) family. MdtC subfamily. In terms of assembly, part of a tripartite efflux system composed of MdtA, MdtB and MdtC. MdtC forms a heteromultimer with MdtB.

The protein localises to the cell inner membrane. Its function is as follows. The MdtABC tripartite complex confers resistance against novobiocin and deoxycholate. This chain is Multidrug resistance protein MdtC, found in Escherichia coli O139:H28 (strain E24377A / ETEC).